A 499-amino-acid polypeptide reads, in one-letter code: Ribose import ATP-binding protein RbsA 1 (499 aa).

ABC transporter domains follow at residues 5–240 and 249–494; these read LEMR…GRSI and TEPG…TAGS. An ATP-binding site is contributed by 37 to 44; sequence GENGAGKS.

It belongs to the ABC transporter superfamily. Ribose importer (TC 3.A.1.2.1) family. The complex is composed of an ATP-binding protein (RbsA), two transmembrane proteins (RbsC) and a solute-binding protein (RbsB).

The protein resides in the cell membrane. It carries out the reaction D-ribose(out) + ATP + H2O = D-ribose(in) + ADP + phosphate + H(+). Its function is as follows. Part of the ABC transporter complex RbsABC involved in ribose import. Responsible for energy coupling to the transport system. In Rubrobacter xylanophilus (strain DSM 9941 / JCM 11954 / NBRC 16129 / PRD-1), this protein is Ribose import ATP-binding protein RbsA 1.